Consider the following 230-residue polypeptide: uncharacterized protein (230 aa).

This is an uncharacterized protein from Sinorhizobium fredii (strain NBRC 101917 / NGR234).